The chain runs to 125 residues: Large ribosomal subunit protein bL12 (125 aa).

The protein belongs to the bacterial ribosomal protein bL12 family. In terms of assembly, homodimer. Part of the ribosomal stalk of the 50S ribosomal subunit. Forms a multimeric L10(L12)X complex, where L10 forms an elongated spine to which 2 to 4 L12 dimers bind in a sequential fashion. Binds GTP-bound translation factors.

In terms of biological role, forms part of the ribosomal stalk which helps the ribosome interact with GTP-bound translation factors. Is thus essential for accurate translation. In Polaromonas naphthalenivorans (strain CJ2), this protein is Large ribosomal subunit protein bL12.